Consider the following 180-residue polypeptide: UPF0134 protein MPN_127 (180 aa).

Belongs to the UPF0134 family.

This chain is UPF0134 protein MPN_127, found in Mycoplasma pneumoniae (strain ATCC 29342 / M129 / Subtype 1) (Mycoplasmoides pneumoniae).